Consider the following 577-residue polypeptide: Protein hinderin (577 aa).

Phosphoserine is present on Ser-21. Residues 91–167 (LKDLCLEDKR…CQELLSLYQK (77 aa)) adopt a coiled-coil conformation. Residue Ser-179 is modified to Phosphoserine. The disordered stretch occupies residues 251 to 282 (TLHHPKDDLDKIPSETTTCNCESPGRKPAVPT). Residues 254-263 (HPKDDLDKIP) show a composition bias toward basic and acidic residues. The stretch at 358–402 (LKKQISEDRKQQLMLQKMELEIEKERLQHLLAQQETKLLLKQQQL) forms a coiled coil. Disordered regions lie at residues 425–444 (SSSI…RKER), 449–492 (FHSH…GSLK), and 520–540 (LSPN…GAWN). Positions 449 to 468 (FHSHMKDDAQWSCQKKDTCR) are enriched in basic and acidic residues. 2 positions are modified to phosphoserine: Ser-490 and Ser-521.

Interacts (via N- and C-terminal domains) with SMC3 (via central hinge region). In terms of tissue distribution, widely expressed.

Competes with SMC1 for binding to SMC3. May affect the availability of SMC3 to engage in the formation of multimeric protein complexes. This is Protein hinderin (KIAA1328) from Homo sapiens (Human).